A 673-amino-acid polypeptide reads, in one-letter code: MLKLFSAFRKDKIWDFDGGIHPPEMKTQSNGTPLRQIPLAPRFVIPLKQHIGAEGELCVSVGDRVLRGQALTHGRGKMLPVHAPTSGTVIAVAPHSTAHPSALAELSVIIDADGEDRWIEREGWSDYRAHSREALIERIHQYGVAGLGGAGFPTGVKLQGGIDKITTLIINAAECEPYITADDRLMQDCAAQIVEGIRILAYILQPREVLIGIEDNKPQAISMLRAVLADAHDISLRVIPTKYPSGGAKQLTQILTGKQVPHGGRSSDIGVLMQNVGTAYAVKRAVVDGEPITERVVTLTGEAVSRPGNIWARLGTPVRHLLNNAGFCPSADQMVIMGGPLMGFTLPWLDVPVVKITNCLLAPSATEMGAPQEETSCIRCSACADACPADLLPQQLYWFSKGQQHDKATAHHIADCIECGACAWVCPSNIPLVQYFRQEKAEINAIRLEEKRAAEAKARFEARQARLEREKAARLARHKSAAVQPAAKDQDAIAAALARVKEKQAQATQPVIIQAGSLPDNSAAIAAREARKAQARAKQAGHPMADSATSGDDPRKAAVEAAVARAKARKQEQQAISEAAEPVDPRKAAVEAAIARAKARKQEQQAVSEAAEPVDPRKAAVEAAIARAKARKQEQQAVSVPVEPVDPRKAAVAAAIARVQAKKAAQQQVVNEE.

4Fe-4S ferredoxin-type domains lie at 368–397 (MGAP…QQLY) and 407–436 (KATA…VQYF). [4Fe-4S] cluster-binding residues include Cys-377, Cys-380, Cys-383, Cys-387, Cys-416, Cys-419, Cys-422, and Cys-426. The disordered stretch occupies residues 529–554 (EARKAQARAKQAGHPMADSATSGDDP).

This sequence belongs to the 4Fe4S bacterial-type ferredoxin family. RnfC subfamily. As to quaternary structure, the complex is composed of six subunits: RsxA, RsxB, RsxC, RsxD, RsxE and RsxG. The cofactor is [4Fe-4S] cluster.

Its subcellular location is the cell inner membrane. Part of a membrane-bound complex that couples electron transfer with translocation of ions across the membrane. Required to maintain the reduced state of SoxR. The protein is Ion-translocating oxidoreductase complex subunit C of Salmonella arizonae (strain ATCC BAA-731 / CDC346-86 / RSK2980).